Reading from the N-terminus, the 118-residue chain is Ribonuclease P protein component (118 aa).

The protein belongs to the RnpA family. Consists of a catalytic RNA component (M1 or rnpB) and a protein subunit.

The catalysed reaction is Endonucleolytic cleavage of RNA, removing 5'-extranucleotides from tRNA precursor.. Functionally, RNaseP catalyzes the removal of the 5'-leader sequence from pre-tRNA to produce the mature 5'-terminus. It can also cleave other RNA substrates such as 4.5S RNA. The protein component plays an auxiliary but essential role in vivo by binding to the 5'-leader sequence and broadening the substrate specificity of the ribozyme. In Vibrio vulnificus (strain CMCP6), this protein is Ribonuclease P protein component.